Consider the following 364-residue polypeptide: MPYQYPALTPEQKKELSDIAHRIVAPGKGILAADESTGSIAKRLQSIGTENTEENRRFYRQLLLTADDRVNPCIVGVILFHETLYQKADDGRPFPQVIKSKGGVVGIKVDKGVVPLAGTNGETTTQGLDGLSERCAQYKKDGADFAKWRCVLKIGEHTPSALAIMENANVLARYASICQQNGIVPIAEPEILPDGDHDLKRCQYVTEKVLAAVYKALSDHHIYLEGTLLKPNMVTPGHACTQKFSHEEIAMATVTALRRTVPPAVTGITFLSGGQSEEEASINLNAINKCPLLKPWALTFSYGRALQASALKAWGGKKENLKAAQEEYVKRALANSLACQGKYTPSGQAGAAASESLFVSNHAY.

Residue tyrosine 5 is modified to Phosphotyrosine. Position 9 is a phosphothreonine (threonine 9). Phosphoserine is present on residues serine 36 and serine 39. Lysine 42 is subject to N6-acetyllysine; alternate. Lysine 42 is covalently cross-linked (Glycyl lysine isopeptide (Lys-Gly) (interchain with G-Cter in SUMO1); alternate). Lysine 42 participates in a covalent cross-link: Glycyl lysine isopeptide (Lys-Gly) (interchain with G-Cter in SUMO2); alternate. Arginine 43 is a binding site for beta-D-fructose 1,6-bisphosphate. Serine 46 is modified (phosphoserine). Lysine 99 is subject to N6-(2-hydroxyisobutyryl)lysine. N6-acetyllysine is present on lysine 108. Lysine 111 carries the N6-acetyllysine; alternate modification. Lysine 111 is subject to N6-malonyllysine; alternate. Serine 132 carries the phosphoserine modification. Lysine 147 is subject to N6-(2-hydroxyisobutyryl)lysine. The active-site Proton acceptor is glutamate 188. Residue lysine 230 is the Schiff-base intermediate with dihydroxyacetone-P of the active site. Serine 272 bears the Phosphoserine mark. Beta-D-fructose 1,6-bisphosphate is bound by residues 272–274, serine 301, and arginine 304; that span reads SGG. Lysine 312 is subject to N6-malonyllysine. Lysine 330 bears the N6-acetyllysine mark.

Belongs to the class I fructose-bisphosphate aldolase family. As to quaternary structure, homotetramer. Interacts with SNX9 and WAS. Interacts with FBP2; the interaction blocks FBP2 inhibition by physiological concentrations of AMP and reduces inhibition by Ca(2+).

It localises to the cytoplasm. Its subcellular location is the myofibril. The protein resides in the sarcomere. The protein localises to the i band. It is found in the m line. The enzyme catalyses beta-D-fructose 1,6-bisphosphate = D-glyceraldehyde 3-phosphate + dihydroxyacetone phosphate. It functions in the pathway carbohydrate degradation; glycolysis; D-glyceraldehyde 3-phosphate and glycerone phosphate from D-glucose: step 4/4. Its function is as follows. Catalyzes the reversible conversion of beta-D-fructose 1,6-bisphosphate (FBP) into two triose phosphate and plays a key role in glycolysis and gluconeogenesis. In addition, may also function as scaffolding protein. This is Fructose-bisphosphate aldolase A (ALDOA) from Pan troglodytes (Chimpanzee).